A 128-amino-acid chain; its full sequence is Protein C10 (128 aa).

It belongs to the UPF0456 family.

It is found in the cytoplasm. The protein is Protein C10 of Xenopus laevis (African clawed frog).